We begin with the raw amino-acid sequence, 1886 residues long: MATRRLPAVTQTDGSRTATESGVPEYEDQIRSYRNDQRRRHIWAGRGRRLLSIMPGVSSSERTLEMQMNPEVQLQRSMNHRAEAVPAEVLYRTFHGSVNHRVYSHRSEERMMVVNGSQVDRSFIQESSFEVLSRTGIEFIHIGVMLVRIQILHRKFAGTMALIVFRDTRWSDDRAVLAAMEIDLSEGNQIVYVLPDIMMTIKSFYRHIQICVMTKGYDGWQGEDNLLITRGLTGRLSNTSNVGFAYDVKAMVEHLQSNGVKAIKGEKWDAKRFHNGQWNIEPSKVVVPMQPTEMKAVSNYDGTTSLRFSNYAAASTSKPPQYNEKDEEINEDEQEINHSLNLILNDEESTDEDEEYYQYQRYAWSQVGDSTFYYDTDGVWEEIDRCNDLPEYVPSETSTPTIDESEAIIDEFLEHAYEQRCDSDESLQSGDPRKYEYPTPQSSPEHLDNESRSRSSSASSTSMQDDVEEIVRLMKEMRMKKQKKKKAQQALSSQAQEEPIIEENIEENKQAQEEPTQEEIPTHKENQPEEIQNEEIHVFEEEPAFKHLAAQLSELVNMAESSGQSGVGFQPPVNAQPDVNMEGPAGYAPATSQATWSNGVNIPVKSANFRWKGPVGNFQLPSAQGKDGAMLVFGMNYSPEVFDRWASITRNYISSFNFNDGGDKIAWMEDLLGETERKIFVSWRMRFKDEYQNLAKIANQDGGTQAILSQIRRIFLGEDPVLGQNTVQNIAFRKLKQLVCPNYQSIRRYLMDYLTLAAETGLMWSETEGPAISEELFTKMPAAIGERVAQAYKIMDPTSAVNLPSRVYFTINYLTEQCKEASYMRSLKALDFCRDFPIEGYYGRSGEKKKYTARKATKYTGKAHDNHIRVTKAKYQRKCKCYICGQEGHYANQCRNKHKDQQRVAILQSLDLKENEEVVSADDKEEEDDEIFSVLGEEDYQEETIMVLEEDDIQQIIKEFSKFGDLSRRNVGPNFPGPAEVQMGVLKPKSSWRRPIQATLEEINCHHNWTAISTGQLACRSCKQFLAGVQCHHCHAVYCFMCAEAYHDVQAEKILSKDYSFSARGKKGKAVIIEEDEIEGEFLISQLQQENQRLQKQVERLQEELMKLHREKDEALKHSEKASRVFSTIQESDEAELNLIKEELRQFKEETRMAIAQLKEAIIVQEEDTIEERCAMILEEKHTENIYSATAKAEYNGLYNVKVGIKPDNMEPYYINAIVDTGATACLIQISAIPENYYEDAKVTVNFRSVLGIGTSTQMIKAGRILIGEQYFRMPVTYVMNMGLSPGIQMIIGCSFIRSLEGGLRIEKDIITFYKLVTSIETSRTTQVANSIEELELSEDEYLNIAASVETPSFLDQEFARKNKDLLKEMKEMKYIGENPMEFWKNNKIKCKLNIINPDIKIMGRPIKHVTPGDEEAMTRQINLLLQMKVIRPSESKHRSTAFIVRSGTEIDPITGKEKKGKERMVFNYKLLNENTESDQYSLPGINTIISKVGRSKIYSKFDLKSGFWQVAMEEESVPWTAFLAGNKLYEWLVMPFGLKNAPAIFQRKMDNVFKGTEKFIAVYIDDILVFSETAEQHSQHLYTMLQLCKENGLILSPTKMKIGTPEIDFLGASLGCTKIKLQPHIISKICDFSDEKLATPEGMRSWLGILSYARNYIQDIGKLVQPLRQKMAPTGDKRMNPETWKMVRQIKEKVKNLPDLQLPPKDSFIIIETDGCMTGWGAVCKWKMSKHDPRSTERICAYASGSFNPIKSTIDAEIQAAIHGLDKFKIYYLDKKELIIRSDCEAIIKFYNKTNENKPSRVRWLTFSDFLTGLGITVTFEHIDGKHNGLADALSRMINFIVEKNDESPYRFTSSVEDALKVCNDDHGRNLISAVINDIITVLRR.

Disordered regions lie at residues 1–24, 420–466, and 478–529; these read MATR…SGVP, RCDS…MQDD, and RMKK…NQPE. Positions 9–20 are enriched in polar residues; that stretch reads VTQTDGSRTATE. Over residues 488 to 498 the composition is skewed to low complexity; the sequence is QQALSSQAQEE. The segment at 879–896 adopts a CCHC-type zinc-finger fold; sequence CKCYICGQEGHYANQCRN. One can recognise a Peptidase A2 domain in the interval 1215 to 1292; sequence INAIVDTGAT…GLSPGIQMII (78 aa). Catalysis depends on Asp-1220, which acts as the For protease activity. Positions 1425–1615 constitute a Reverse transcriptase domain; sequence LLQMKVIRPS…PEIDFLGASL (191 aa). In terms of domain architecture, RNase H type-1 spans 1706-1841; the sequence is KDSFIIIETD…ADALSRMINF (136 aa). Positions 1715, 1758, 1784, and 1833 each coordinate Mg(2+).

Polyprotein P3 is presumably proteolytically cleaved into several chains by viral protease.

It carries out the reaction Endonucleolytic cleavage to 5'-phosphomonoester.. The enzyme catalyses DNA(n) + a 2'-deoxyribonucleoside 5'-triphosphate = DNA(n+1) + diphosphate. In terms of biological role, capsid protein self assembles to form a bacilliform capsid about 90-900 nm in length. The capsid encapsulates the genomic dsDNA. Following virus entry into host cell, provides nuclear import of the viral genome. Virus particles do not enter the nucleus, but are targeted to the nuclear membrane through the interaction with host importins. This is Polyprotein P3 from Commelina yellow mottle virus (CoYMV).